Consider the following 175-residue polypeptide: Large ribosomal subunit protein uL10 (175 aa).

Belongs to the universal ribosomal protein uL10 family. In terms of assembly, part of the ribosomal stalk of the 50S ribosomal subunit. The N-terminus interacts with L11 and the large rRNA to form the base of the stalk. The C-terminus forms an elongated spine to which L12 dimers bind in a sequential fashion forming a multimeric L10(L12)X complex.

Its function is as follows. Forms part of the ribosomal stalk, playing a central role in the interaction of the ribosome with GTP-bound translation factors. This chain is Large ribosomal subunit protein uL10, found in Prochlorococcus marinus (strain MIT 9515).